The sequence spans 449 residues: tRNA-2-methylthio-N(6)-dimethylallyladenosine synthase (449 aa).

One can recognise an MTTase N-terminal domain in the interval 2 to 119 (KGLFIRTYGC…LPEMIARASR (118 aa)). Positions 11, 47, 82, 157, 161, and 164 each coordinate [4Fe-4S] cluster. The 236-residue stretch at 143-378 (EADGPAAFVS…QALLREQQTE (236 aa)) folds into the Radical SAM core domain. A TRAM domain is found at 381-443 (ASQIGKTLPV…LNSLTGELVR (63 aa)).

The protein belongs to the methylthiotransferase family. MiaB subfamily. Monomer. The cofactor is [4Fe-4S] cluster.

The protein resides in the cytoplasm. The enzyme catalyses N(6)-dimethylallyladenosine(37) in tRNA + (sulfur carrier)-SH + AH2 + 2 S-adenosyl-L-methionine = 2-methylsulfanyl-N(6)-dimethylallyladenosine(37) in tRNA + (sulfur carrier)-H + 5'-deoxyadenosine + L-methionine + A + S-adenosyl-L-homocysteine + 2 H(+). In terms of biological role, catalyzes the methylthiolation of N6-(dimethylallyl)adenosine (i(6)A), leading to the formation of 2-methylthio-N6-(dimethylallyl)adenosine (ms(2)i(6)A) at position 37 in tRNAs that read codons beginning with uridine. In Hyphomonas neptunium (strain ATCC 15444), this protein is tRNA-2-methylthio-N(6)-dimethylallyladenosine synthase.